A 531-amino-acid chain; its full sequence is 2-isopropylmalate synthase (531 aa).

The Pyruvate carboxyltransferase domain occupies 8–284 (IIIFDTTLRD…LTNIDTKQIY (277 aa)). Positions 17, 208, 210, and 244 each coordinate Mn(2+). Positions 408 to 531 (RVELVQVSCG…TQDKQTEVTA (124 aa)) are regulatory domain.

The protein belongs to the alpha-IPM synthase/homocitrate synthase family. LeuA type 1 subfamily. As to quaternary structure, homodimer. Mn(2+) is required as a cofactor.

The protein localises to the cytoplasm. It carries out the reaction 3-methyl-2-oxobutanoate + acetyl-CoA + H2O = (2S)-2-isopropylmalate + CoA + H(+). The protein operates within amino-acid biosynthesis; L-leucine biosynthesis; L-leucine from 3-methyl-2-oxobutanoate: step 1/4. Functionally, catalyzes the condensation of the acetyl group of acetyl-CoA with 3-methyl-2-oxobutanoate (2-ketoisovalerate) to form 3-carboxy-3-hydroxy-4-methylpentanoate (2-isopropylmalate). The chain is 2-isopropylmalate synthase from Trichormus variabilis (strain ATCC 29413 / PCC 7937) (Anabaena variabilis).